Reading from the N-terminus, the 107-residue chain is YcgL domain-containing protein Pcryo_0807 (107 aa).

The YcgL domain maps to 1–95 (MHCDIYKFLK…QDVMRRQAEL (95 aa)).

This is YcgL domain-containing protein Pcryo_0807 from Psychrobacter cryohalolentis (strain ATCC BAA-1226 / DSM 17306 / VKM B-2378 / K5).